We begin with the raw amino-acid sequence, 390 residues long: Outer membrane protein assembly factor BamB (390 aa).

Residues 1–25 (MPVLRDRIPRRGFFLGLALLAALSG) form the signal peptide. A lipid anchor (N-palmitoyl cysteine) is attached at cysteine 26. Cysteine 26 carries S-diacylglycerol cysteine lipidation.

The protein belongs to the BamB family. In terms of assembly, part of the Bam complex.

The protein localises to the cell outer membrane. Its function is as follows. Part of the outer membrane protein assembly complex, which is involved in assembly and insertion of beta-barrel proteins into the outer membrane. This chain is Outer membrane protein assembly factor BamB, found in Marinobacter adhaerens (strain DSM 23420 / HP15).